The following is a 138-amino-acid chain: Protein FAM136A (138 aa).

Ala-2 is modified (N-acetylalanine). Phosphothreonine is present on residues Thr-124 and Thr-126.

Belongs to the FAM136 family.

This chain is Protein FAM136A (Fam136a), found in Rattus norvegicus (Rat).